The following is a 430-amino-acid chain: MSVLLRGVRLYGEGEQVDVLVEGEQIANIGAGIDIPDTADVIDAIDQVLLPGLVDLHTHLREPGREYAEDIETGSAAAALGGYTAVFAMPNTTPVADSPVVTDHVWRRGQQVGLVDVHPVGAVTVGLAGAELTEMGMMAAGAAQVRIFSDDGNCVHNPLVMRRALEYATGLGVLIAQHAEEPRLTVGAVAHEGPTAARLGLSGWPRAAEESIVARDALLARDAGARVHICHASTAGTVEILKWAKEQGISITAEVTPHHLLLDDSRLASYDGVNRVNPPLRETADAVALRQALADGIIDCVTTDHAPHADHEKCVEFSAARPGMLGLQTALSVVVHTMVVPGLLSWRDVAQVMSENPARIAGLPDHGRPLEVGEPANLTVVDPDVTWTVTGDGLASRSANTPYEAMTLPATVTATLLRGKVTARGQKSPV.

Residues His-57 and His-59 each coordinate Zn(2+). Substrate is bound by residues 59 to 61 and Asn-91; that span reads HLR. The Zn(2+) site is built by Asp-151, His-178, and His-231. Asn-277 is a substrate binding site. Asp-304 serves as a coordination point for Zn(2+). The active site involves Asp-304. Residues His-308 and 322–323 each bind substrate; that span reads PG.

It belongs to the metallo-dependent hydrolases superfamily. DHOase family. Class I DHOase subfamily. It depends on Zn(2+) as a cofactor.

The enzyme catalyses (S)-dihydroorotate + H2O = N-carbamoyl-L-aspartate + H(+). Its pathway is pyrimidine metabolism; UMP biosynthesis via de novo pathway; (S)-dihydroorotate from bicarbonate: step 3/3. Catalyzes the reversible cyclization of carbamoyl aspartate to dihydroorotate. The polypeptide is Dihydroorotase (Mycobacterium leprae (strain TN)).